The chain runs to 178 residues: Bifunctional protein PyrR (178 aa).

Positions 99-111 (VIIVDDVLYTCRT) match the PRPP-binding motif.

Belongs to the purine/pyrimidine phosphoribosyltransferase family. PyrR subfamily. In terms of assembly, homodimer and homohexamer; in equilibrium.

It carries out the reaction UMP + diphosphate = 5-phospho-alpha-D-ribose 1-diphosphate + uracil. Its function is as follows. Regulates transcriptional attenuation of the pyrimidine nucleotide (pyr) operon by binding in a uridine-dependent manner to specific sites on pyr mRNA. This disrupts an antiterminator hairpin in the RNA and favors formation of a downstream transcription terminator, leading to a reduced expression of downstream genes. In terms of biological role, also displays a weak uracil phosphoribosyltransferase activity which is not physiologically significant. The chain is Bifunctional protein PyrR from Clostridium perfringens (strain ATCC 13124 / DSM 756 / JCM 1290 / NCIMB 6125 / NCTC 8237 / Type A).